Consider the following 303-residue polypeptide: Probable cell division protein WhiA (303 aa).

A DNA-binding region (H-T-H motif) is located at residues 272–303; it reads SIQQLADSLSRPLTKSGVNHRLRKINKIADEL.

It belongs to the WhiA family.

Functionally, involved in cell division and chromosome segregation. This chain is Probable cell division protein WhiA, found in Streptococcus sanguinis (strain SK36).